Reading from the N-terminus, the 20-residue chain is Thrombin-like enzyme okinaxobin-2 (20 aa).

The region spanning 1–20 is the Peptidase S1 domain; the sequence is VVGGDECNINEHRFLVALYY.

Belongs to the peptidase S1 family. Snake venom subfamily. In terms of assembly, monomer. In terms of processing, glycosylated. Expressed by the venom gland.

It localises to the secreted. With respect to regulation, strongly inactivated by diisopropylfluorophosphate (DFP) and to a lesser extent by tosyl-L-lysine chloromethyl ketone (TLCK). In terms of biological role, thrombin-like snake venom serine protease. Releases both fibrinopeptides A and B from fibrinogen (FGA and FGB) to form fibrin clots. This Ovophis okinavensis (Ryukyu Island pit viper) protein is Thrombin-like enzyme okinaxobin-2.